Here is a 122-residue protein sequence, read N- to C-terminus: Acidic phospholipase A2 1 (122 aa).

7 disulfide bridges follow: C26–C115, C28–C44, C43–C94, C49–C122, C50–C87, C57–C81, and C75–C85. Ca(2+) contacts are provided by Y27, G29, and G31. Residue H47 is part of the active site. D48 is a binding site for Ca(2+). Residue D88 is part of the active site.

This sequence belongs to the phospholipase A2 family. Group II subfamily. D49 sub-subfamily. Homodimer. Ca(2+) serves as cofactor. Expressed by the venom gland.

The protein resides in the secreted. It carries out the reaction a 1,2-diacyl-sn-glycero-3-phosphocholine + H2O = a 1-acyl-sn-glycero-3-phosphocholine + a fatty acid + H(+). PLA2 catalyzes the calcium-dependent hydrolysis of the 2-acyl groups in 3-sn-phosphoglycerides. This Protobothrops mucrosquamatus (Taiwan habu) protein is Acidic phospholipase A2 1.